The sequence spans 290 residues: uncharacterized protein (290 aa).

Helical transmembrane passes span 14–34 (ALLN…IGIL), 82–102 (ISSL…LIGG), 115–135 (NLIA…IYLY), 158–174 (DAFV…SSQL), and 176–196 (LPWV…KTAW).

Belongs to the cation diffusion facilitator (CDF) transporter (TC 2.A.4) family.

Its subcellular location is the cell membrane. This is an uncharacterized protein from Bacillus subtilis (strain 168).